Here is a 340-residue protein sequence, read N- to C-terminus: Solute carrier family 35 member G3 (340 aa).

A disordered region spans residues 11-33; sequence PDFTQPSPPSTPASLPSKHHHRC. The next 9 helical transmembrane spans lie at 39-59, 69-89, 107-127, 160-180, 189-209, 223-243, 257-277, 283-303, and 307-327; these read TKGL…VGPF, LPSL…ALLL, FLHA…VQVV, AWCG…PGLG, LYTA…SLGL, TVAF…LFVL, CVVA…YAVT, LVCA…YYVL, and VAPS…IITA. The EamA 1 domain maps to 51–176; sequence LSAGFVGPFS…STLGLIIIVG (126 aa). The EamA 2 domain maps to 274–327; it reads YAVTKAHPALVCAVLHSEVVVALMLQYYVLYETVAPSDIMGAGVVLGSIAIITA.

Belongs to the SLC35G solute transporter family.

The protein resides in the membrane. This chain is Solute carrier family 35 member G3 (Slc35g3), found in Mus musculus (Mouse).